Consider the following 143-residue polypeptide: Transcription antitermination protein NusB (143 aa).

This sequence belongs to the NusB family.

Functionally, involved in transcription antitermination. Required for transcription of ribosomal RNA (rRNA) genes. Binds specifically to the boxA antiterminator sequence of the ribosomal RNA (rrn) operons. This chain is Transcription antitermination protein NusB, found in Desulforapulum autotrophicum (strain ATCC 43914 / DSM 3382 / VKM B-1955 / HRM2) (Desulfobacterium autotrophicum).